We begin with the raw amino-acid sequence, 468 residues long: Mitochondrial dynamics protein MID51 (468 aa).

The Mitochondrial intermembrane segment spans residues 1–29 (MAGVNGDRKGKKDDNGLGTAIDFVLSNAK). Residues 30 to 47 (LVLGVGGAAMLGIATLAV) form a helical membrane-spanning segment. Topologically, residues 48 to 468 (KRMYDRALSA…SDPESLLRTV (421 aa)) are cytoplasmic. A dimerization region spans residues 50–196 (MYDRALSAPS…LSGSLYDDLQ (147 aa)). A disordered region spans residues 56 to 123 (SAPSSPTKAD…RGLARGGRPA (68 aa)). Polar residues predominate over residues 91–108 (QNVSRSLQTLPTSSSSFK). The interval 161-170 (AALDICAELR) is important for interaction with DNM1L. The ADP site is built by Ser-188, Ser-190, and His-202. The important for interaction with DNM1L stretch occupies residues 235 to 244 (RRENLEYFPR). Residues Ser-344, Arg-346, and Lys-372 each contribute to the ADP site.

This sequence belongs to the MID49/MID51 family. As to quaternary structure, homodimer.

The protein localises to the mitochondrion outer membrane. Mitochondrial outer membrane protein which regulates mitochondrial fission/fusion dynamics. Promotes the recruitment and association of the fission mediator dynamin-related protein 1 (DNM1L) to the mitochondrial surface independently of the mitochondrial fission FIS1 and MFF proteins. Regulates DNM1L GTPase activity and DNM1L oligomerization. The protein is Mitochondrial dynamics protein MID51 (mief1) of Danio rerio (Zebrafish).